The following is a 147-amino-acid chain: MKVILLKDIKSVGKKGEVINVSDGYARNFLFPRKLAEEANNSNMRVLNLKKDAERKQKLQETEEAQKLANELKGKVLKLSAKAGENGRLFGAITSKDIAAEIKKQFNVDIDKKKVNSETIRKLGNYEIELKLYPEISTKINVLISEG.

The protein belongs to the bacterial ribosomal protein bL9 family.

Binds to the 23S rRNA. The chain is Large ribosomal subunit protein bL9 from Clostridium acetobutylicum (strain ATCC 824 / DSM 792 / JCM 1419 / IAM 19013 / LMG 5710 / NBRC 13948 / NRRL B-527 / VKM B-1787 / 2291 / W).